The primary structure comprises 252 residues: Redox-sensing transcriptional repressor Rex (252 aa).

The H-T-H motif DNA-binding region spans 26 to 65; that stretch reads LYLRALTALSERSVPTVSSEELAAAAGVNSAKLRKDFSYL. Residue 100 to 105 participates in NAD(+) binding; that stretch reads GIGNLG. The segment at 222–252 is disordered; sequence EAAAEGAIPAAASKESADKGPDGDVPAVMPA.

Belongs to the transcriptional regulatory Rex family. Homodimer.

The protein resides in the cytoplasm. Its function is as follows. Modulates transcription in response to changes in cellular NADH/NAD(+) redox state. This Streptomyces avermitilis (strain ATCC 31267 / DSM 46492 / JCM 5070 / NBRC 14893 / NCIMB 12804 / NRRL 8165 / MA-4680) protein is Redox-sensing transcriptional repressor Rex.